The primary structure comprises 137 residues: Ribosome-binding factor A (137 aa).

It belongs to the RbfA family. In terms of assembly, monomer. Binds 30S ribosomal subunits, but not 50S ribosomal subunits or 70S ribosomes.

The protein resides in the cytoplasm. Its function is as follows. One of several proteins that assist in the late maturation steps of the functional core of the 30S ribosomal subunit. Associates with free 30S ribosomal subunits (but not with 30S subunits that are part of 70S ribosomes or polysomes). Required for efficient processing of 16S rRNA. May interact with the 5'-terminal helix region of 16S rRNA. The sequence is that of Ribosome-binding factor A from Shewanella amazonensis (strain ATCC BAA-1098 / SB2B).